A 241-amino-acid polypeptide reads, in one-letter code: Large ribosomal subunit protein eL32 (241 aa).

Residues 1–16 (MADNEEDVEAEEEYTE) are compositionally biased toward acidic residues. Disordered regions lie at residues 1-47 (MADN…GADQ) and 68-182 (VGGL…HPSG). The segment covering 29–44 (ESLREAGFESVEDVRG) has biased composition (basic and acidic residues). Acidic residues predominate over residues 73 to 96 (VESETEAEVEEEGGEEAPDEDVET). Residues 103-116 (LTEKTPDLSDEDAR) show a composition bias toward basic and acidic residues. Positions 133 to 159 (DHHKKKRVSTSWRKPRGQLSKQRRGIK) are enriched in basic residues.

The protein belongs to the eukaryotic ribosomal protein eL32 family. As to quaternary structure, part of the 50S ribosomal subunit. Interacts weakly with protein L15.

Binds to the 23S rRNA. The polypeptide is Large ribosomal subunit protein eL32 (rpl32e) (Haloarcula marismortui (strain ATCC 43049 / DSM 3752 / JCM 8966 / VKM B-1809) (Halobacterium marismortui)).